Here is a 597-residue protein sequence, read N- to C-terminus: Sialic acid-binding Ig-like lectin 12 (597 aa).

Residues 1-20 (MLLLLLLLLLPPLLCGRVGA) form the signal peptide. 2 Ig-like V-type domains span residues 21-144 (KEQK…VNVT) and 145-271 (ASQD…VHVT). The Extracellular portion of the chain corresponds to 21–483 (KEQKDYLLTM…RPISGVTLGA (463 aa)). Cys-46 and Cys-106 are joined by a disulfide. N-linked (GlcNAc...) asparagine glycosylation is found at Asn-142, Asn-181, Asn-232, and Asn-292. Intrachain disulfides connect Cys-168–Cys-301, Cys-173–Cys-233, and Cys-295–Cys-344. The 84-residue stretch at 277 to 360 (PTFSIPGTLE…AGVTTTRAVR (84 aa)) folds into the Ig-like C2-type 1 domain. 3 N-linked (GlcNAc...) asparagine glycosylation sites follow: Asn-362, Asn-369, and Asn-387. Positions 367–464 (PQNLTMTVFQ…GSQHISLSLS (98 aa)) constitute an Ig-like C2-type 2 domain. Cys-403 and Cys-448 are disulfide-bonded. A helical transmembrane segment spans residues 484 to 504 (VGGAGATALVFLSFCIIFVVV). Over 505 to 597 (RSCRKKSARP…YEYSEINILK (93 aa)) the chain is Cytoplasmic. The disordered stretch occupies residues 514-558 (PAVGVGDTGMEDTNAVRGSASQGPLIESPADDSPPHHAPPALATP). Positions 565-570 (IQYASL) match the ITIM motif motif. Phosphotyrosine is present on residues Tyr-567 and Tyr-590. Positions 588 to 593 (YEYSEI) match the SLAM-like motif motif.

It belongs to the immunoglobulin superfamily. SIGLEC (sialic acid binding Ig-like lectin) family.

The protein resides in the membrane. Putative adhesion molecule that mediates sialic-acid dependent binding to cells. The sialic acid recognition site may be masked by cis interactions with sialic acids on the same cell surface. The polypeptide is Sialic acid-binding Ig-like lectin 12 (SIGLEC12) (Pan troglodytes (Chimpanzee)).